We begin with the raw amino-acid sequence, 169 residues long: Peptide deformylase (169 aa).

Fe cation is bound by residues Cys-91 and His-133. Glu-134 is an active-site residue. Residue His-137 participates in Fe cation binding.

This sequence belongs to the polypeptide deformylase family. Fe(2+) is required as a cofactor.

It catalyses the reaction N-terminal N-formyl-L-methionyl-[peptide] + H2O = N-terminal L-methionyl-[peptide] + formate. Its function is as follows. Removes the formyl group from the N-terminal Met of newly synthesized proteins. Requires at least a dipeptide for an efficient rate of reaction. N-terminal L-methionine is a prerequisite for activity but the enzyme has broad specificity at other positions. The sequence is that of Peptide deformylase from Aliivibrio salmonicida (strain LFI1238) (Vibrio salmonicida (strain LFI1238)).